The following is a 95-amino-acid chain: UPF0358 protein BCG9842_B1188 (95 aa).

It belongs to the UPF0358 family.

This chain is UPF0358 protein BCG9842_B1188, found in Bacillus cereus (strain G9842).